A 123-amino-acid chain; its full sequence is Large ribosomal subunit protein uL14 (123 aa).

Belongs to the universal ribosomal protein uL14 family. As to quaternary structure, part of the 50S ribosomal subunit. Forms a cluster with proteins L3 and L19. In the 70S ribosome, L14 and L19 interact and together make contacts with the 16S rRNA in bridges B5 and B8.

In terms of biological role, binds to 23S rRNA. Forms part of two intersubunit bridges in the 70S ribosome. The sequence is that of Large ribosomal subunit protein uL14 from Histophilus somni (strain 129Pt) (Haemophilus somnus).